We begin with the raw amino-acid sequence, 493 residues long: Glycylpeptide N-tetradecanoyltransferase (493 aa).

A disordered region spans residues 1–30 (MSDSKDSKGKAPQKPNDAEQTPGGKLTPQA). Residues 82–85 (FKFW), 216–218 (LCI), and 224–228 (SKRLA) contribute to the tetradecanoyl-CoA site. Leu-493 acts as the Proton acceptor; via carboxylate in catalysis.

This sequence belongs to the NMT family. As to quaternary structure, monomer.

The protein resides in the cytoplasm. The enzyme catalyses N-terminal glycyl-[protein] + tetradecanoyl-CoA = N-tetradecanoylglycyl-[protein] + CoA + H(+). Adds a myristoyl group to the N-terminal glycine residue of certain cellular proteins. This chain is Glycylpeptide N-tetradecanoyltransferase (swoF), found in Emericella nidulans (strain FGSC A4 / ATCC 38163 / CBS 112.46 / NRRL 194 / M139) (Aspergillus nidulans).